Reading from the N-terminus, the 134-residue chain is Small ribosomal subunit protein uS11 (134 aa).

It belongs to the universal ribosomal protein uS11 family. In terms of assembly, part of the 30S ribosomal subunit. Interacts with proteins S7 and S18. Binds to IF-3.

Its function is as follows. Located on the platform of the 30S subunit, it bridges several disparate RNA helices of the 16S rRNA. Forms part of the Shine-Dalgarno cleft in the 70S ribosome. This chain is Small ribosomal subunit protein uS11, found in Corynebacterium jeikeium (strain K411).